Here is a 133-residue protein sequence, read N- to C-terminus: Protein PsiE homolog (133 aa).

The next 4 membrane-spanning stretches (helical) occupy residues 13 to 33 (LQWI…IFLI), 55 to 75 (VESI…IKYF), 81 to 101 (FPLR…IIVS), and 105 to 125 (PMET…LYIS).

The protein belongs to the PsiE family.

The protein resides in the cell membrane. In Bacillus cereus (strain ATCC 10987 / NRS 248), this protein is Protein PsiE homolog.